Reading from the N-terminus, the 390-residue chain is MSKQQHPSSKTQITRRRDTADMTFEQVLHKGSSANMGGLSSMLGKDREASKTAVDQYFRHWDGKTAKTETTKVREERKADYATLTRQYYNLVTDFYEYGWGQSFHFCTFAPGETFASAITRYEHTLAHRIGIKKGMKVLDIGCGVGGPARQIAKFTGANITGITINEYQVERARRYAEMEGYGAGEQLKFVQGDFMALPFEKETFDAVYSIEATVHAPKLEDVYKQIFNVLKPGGIFGLYEWVMTDAYDENDPHHKEIRFGIEHGGGIANLQTAQTAIAAIKAAGFELLESEDLADNSDRAPWYWPLGGNAWQYASTFGDILSTFTMTPAGRAIAHTVLGVVESIGLVPPGTKKTADSLSTTAAALVAGGKEGLFTPMFLMVARKPVAKE.

Positions 1–12 (MSKQQHPSSKTQ) are enriched in polar residues. Residues 1–21 (MSKQQHPSSKTQITRRRDTAD) are disordered.

This sequence belongs to the class I-like SAM-binding methyltransferase superfamily. Erg6/SMT family.

It carries out the reaction zymosterol + S-adenosyl-L-methionine = fecosterol + S-adenosyl-L-homocysteine + H(+). It functions in the pathway steroid metabolism; ergosterol biosynthesis; ergosterol from zymosterol: step 1/5. Catalyzes the methyl transfer from S-adenosyl-methionine to the C-24 of zymosterol to form fecosterol. The sequence is that of Sterol 24-C-methyltransferase (ERG6) from Pyricularia oryzae (strain 70-15 / ATCC MYA-4617 / FGSC 8958) (Rice blast fungus).